A 586-amino-acid chain; its full sequence is Arginine--tRNA ligase (586 aa).

The 'HIGH' region signature appears at 133-143 (ANPTGPLNIVS).

Belongs to the class-I aminoacyl-tRNA synthetase family. In terms of assembly, monomer.

It is found in the cytoplasm. It catalyses the reaction tRNA(Arg) + L-arginine + ATP = L-arginyl-tRNA(Arg) + AMP + diphosphate. This chain is Arginine--tRNA ligase, found in Leptospira interrogans serogroup Icterohaemorrhagiae serovar copenhageni (strain Fiocruz L1-130).